A 221-amino-acid chain; its full sequence is Kynurenine formamidase (221 aa).

Residue F30 participates in substrate binding. Residues H60, H64, and D66 each coordinate Zn(2+). Catalysis depends on H70, which acts as the Proton donor/acceptor. H172 and E184 together coordinate Zn(2+).

It belongs to the Cyclase 1 superfamily. KynB family. In terms of assembly, homodimer. It depends on Zn(2+) as a cofactor.

The enzyme catalyses N-formyl-L-kynurenine + H2O = L-kynurenine + formate + H(+). It participates in amino-acid degradation; L-tryptophan degradation via kynurenine pathway; L-kynurenine from L-tryptophan: step 2/2. Functionally, catalyzes the hydrolysis of N-formyl-L-kynurenine to L-kynurenine, the second step in the kynurenine pathway of tryptophan degradation. This chain is Kynurenine formamidase, found in Polaromonas sp. (strain JS666 / ATCC BAA-500).